The following is an 80-amino-acid chain: Translation initiation factor IF-1 (80 aa).

In terms of domain architecture, S1-like spans glutamate 6–lysine 80.

Belongs to the IF-1 family. Component of the 30S ribosomal translation pre-initiation complex which assembles on the 30S ribosome in the order IF-2 and IF-3, IF-1 and N-formylmethionyl-tRNA(fMet); mRNA recruitment can occur at any time during PIC assembly.

Its subcellular location is the cytoplasm. Functionally, one of the essential components for the initiation of protein synthesis. Stabilizes the binding of IF-2 and IF-3 on the 30S subunit to which N-formylmethionyl-tRNA(fMet) subsequently binds. Helps modulate mRNA selection, yielding the 30S pre-initiation complex (PIC). Upon addition of the 50S ribosomal subunit IF-1, IF-2 and IF-3 are released leaving the mature 70S translation initiation complex. This is Translation initiation factor IF-1 from Deinococcus geothermalis (strain DSM 11300 / CIP 105573 / AG-3a).